The primary structure comprises 1345 residues: DNA-directed RNA polymerase subunit beta' (1345 aa).

The Zn(2+) site is built by C60, C62, C75, and C78. Residues D536, D538, and D540 each contribute to the Mg(2+) site. Zn(2+)-binding residues include C895, C974, C981, and C984.

It belongs to the RNA polymerase beta' chain family. The RNAP catalytic core consists of 2 alpha, 1 beta, 1 beta' and 1 omega subunit. When a sigma factor is associated with the core the holoenzyme is formed, which can initiate transcription. The cofactor is Mg(2+). Zn(2+) serves as cofactor.

It catalyses the reaction RNA(n) + a ribonucleoside 5'-triphosphate = RNA(n+1) + diphosphate. In terms of biological role, DNA-dependent RNA polymerase catalyzes the transcription of DNA into RNA using the four ribonucleoside triphosphates as substrates. The protein is DNA-directed RNA polymerase subunit beta' of Bifidobacterium longum (strain DJO10A).